The sequence spans 83 residues: Small ribosomal subunit protein eS21 (83 aa).

This sequence belongs to the eukaryotic ribosomal protein eS21 family. As to quaternary structure, component of the 40S small ribosomal subunit.

It localises to the cytoplasm. It is found in the cytosol. The protein resides in the rough endoplasmic reticulum. The chain is Small ribosomal subunit protein eS21 (RpS21) from Biphyllus lunatus (Beetle).